The sequence spans 865 residues: Alanine--tRNA ligase (865 aa).

4 residues coordinate Zn(2+): histidine 556, histidine 560, cysteine 660, and histidine 664.

Belongs to the class-II aminoacyl-tRNA synthetase family. Zn(2+) serves as cofactor.

The protein resides in the cytoplasm. The catalysed reaction is tRNA(Ala) + L-alanine + ATP = L-alanyl-tRNA(Ala) + AMP + diphosphate. Catalyzes the attachment of alanine to tRNA(Ala) in a two-step reaction: alanine is first activated by ATP to form Ala-AMP and then transferred to the acceptor end of tRNA(Ala). Also edits incorrectly charged Ser-tRNA(Ala) and Gly-tRNA(Ala) via its editing domain. This chain is Alanine--tRNA ligase, found in Ruthia magnifica subsp. Calyptogena magnifica.